Consider the following 151-residue polypeptide: Protein PLANT CADMIUM RESISTANCE 1 (151 aa).

2 consecutive transmembrane segments (helical) span residues 31–47 and 54–71; these read ITLCCPCITFGQVAEIV and CCAAGALYMLIDLITSCG.

This sequence belongs to the cornifelin family. As to quaternary structure, homopentamer. In terms of tissue distribution, expressed in aerial part, but not in roots. Detected in the guard and mesophyll cells.

It localises to the cell membrane. In terms of biological role, involved in glutathione-independent cadmium resistance. Reduces cadmium uptake rather than activating efflux, but is not closely coupled to calcium transporter. This chain is Protein PLANT CADMIUM RESISTANCE 1 (PCR1), found in Arabidopsis thaliana (Mouse-ear cress).